A 176-amino-acid polypeptide reads, in one-letter code: Isopentenyl-diphosphate Delta-isomerase (176 aa).

Mn(2+)-binding residues include histidine 22 and histidine 28. Residues 26 to 160 (LRHKAVSVFV…PERYTPWLRI (135 aa)) enclose the Nudix hydrolase domain. The active site involves cysteine 62. Histidine 64 provides a ligand contact to Mn(2+). A Mg(2+)-binding site is contributed by glutamate 82. Glutamate 108 and glutamate 110 together coordinate Mn(2+). Glutamate 110 is a catalytic residue.

This sequence belongs to the IPP isomerase type 1 family. The cofactor is Mg(2+). Requires Mn(2+) as cofactor.

The protein localises to the cytoplasm. The enzyme catalyses isopentenyl diphosphate = dimethylallyl diphosphate. It participates in isoprenoid biosynthesis; dimethylallyl diphosphate biosynthesis; dimethylallyl diphosphate from isopentenyl diphosphate: step 1/1. It functions in the pathway porphyrin-containing compound metabolism; chlorophyll biosynthesis. In terms of biological role, catalyzes the 1,3-allylic rearrangement of the homoallylic substrate isopentenyl (IPP) to its highly electrophilic allylic isomer, dimethylallyl diphosphate (DMAPP). This Dinoroseobacter shibae (strain DSM 16493 / NCIMB 14021 / DFL 12) protein is Isopentenyl-diphosphate Delta-isomerase.